We begin with the raw amino-acid sequence, 244 residues long: 5'-deoxynucleotidase (244 aa).

The enzyme catalyses a 2'-deoxyribonucleoside 5'-phosphate + H2O = a 2'-deoxyribonucleoside + phosphate. In terms of biological role, following host DNA degradation, is responsible for the degradation of 5'-dNMP's to deoxynucleosides that can be further excreted. Active on deoxynucleoside 5'-monophosphates but not active as a phosphatase on ribonucleotides, deoxynucleoside 5'-triphosphates, deoxynucleoside 3'-monophosphates, or deoxyoligonucleotides. This Escherichia coli (Enterobacteria phage T5) protein is 5'-deoxynucleotidase (dmp).